We begin with the raw amino-acid sequence, 466 residues long: Alpha-1A adrenergic receptor (466 aa).

At 1 to 25 (MVFLSGNASDSSNCTHPPAPVNISK) the chain is on the extracellular side. N-linked (GlcNAc...) asparagine glycans are attached at residues N7, N13, and N22. A helical membrane pass occupies residues 26-51 (AILLGVILGGLILFGVLGNILVILSV). Residues 52–63 (ACHRHLHSVTHY) lie on the Cytoplasmic side of the membrane. Residues 64–89 (YIVNLAVADLLLTSTVLPFSAIFEIL) traverse the membrane as a helical segment. Topologically, residues 90–99 (GYWAFGRVFC) are extracellular. A helical membrane pass occupies residues 100 to 122 (NIWAAVDVLCCTASIISLCVISI). Topologically, residues 123–143 (DRYIGVSYPLRYPTIVTQRRG) are cytoplasmic. Residues 144 to 168 (LRALLCVWAFSLVISVGPLFGWRQP) form a helical membrane-spanning segment. The Extracellular portion of the chain corresponds to 169-181 (APDDETICQINEE). Residues 182 to 205 (PGYVLFSALGSFYVPLTIILAMYC) form a helical membrane-spanning segment. The Cytoplasmic portion of the chain corresponds to 206–272 (RVYVVAKRES…KFSREKKAAK (67 aa)). A helical membrane pass occupies residues 273 to 297 (TLGIVVGCFVLCWLPFFLVMPIGSF). Residues 298–304 (FPDFKPP) are Extracellular-facing. The chain crosses the membrane as a helical span at residues 305-329 (ETVFKIVFWLGYLNSCINPIIYPCS). Topologically, residues 330–466 (SQEFKKAFQN…ISLSENGEEV (137 aa)) are cytoplasmic. The short motif at 334-349 (KKAFQNVLKIQCLRRK) is the Nuclear localization signal element. C345 is lipidated: S-palmitoyl cysteine.

The protein belongs to the G-protein coupled receptor 1 family. Adrenergic receptor subfamily. ADRA1A sub-subfamily. Homo- and heterooligomer. Heterooligomerizes with ADRA1B homooligomers in cardiac myocytes. Interacts with CAVIN4. In terms of tissue distribution, abundant in liver, vas deferens, brain, and aorta, but not in heart.

Its subcellular location is the nucleus membrane. It localises to the cell membrane. The protein resides in the cytoplasm. It is found in the membrane. The protein localises to the caveola. This alpha-adrenergic receptor mediates its action by association with G proteins that activate a phosphatidylinositol-calcium second messenger system. Its effect is mediated by G(q) and G(11) proteins. Nuclear ADRA1A-ADRA1B heterooligomers regulate phenylephrine (PE)-stimulated ERK signaling in cardiac myocytes. This is Alpha-1A adrenergic receptor (ADRA1A) from Oryctolagus cuniculus (Rabbit).